A 376-amino-acid chain; its full sequence is Alpha-2,8-sialyltransferase 8E (376 aa).

Residues 1–17 (MRYADPSANRDLLGSRT) are Cytoplasmic-facing. Residues 18–38 (LLFIFICAFALVTLLQQILYG) traverse the membrane as a helical; Signal-anchor for type II membrane protein segment. The Lumenal portion of the chain corresponds to 39–376 (RNYIKRYFEF…RVHTGTCSCC (338 aa)). N-linked (GlcNAc...) asparagine glycosylation is found at Asn-56 and Asn-96. Disulfide bonds link Cys-164–Cys-313 and Cys-178–Cys-373. Substrate contacts are provided by residues Asn-192 and 214 to 216 (NPS). N-linked (GlcNAc...) asparagine glycosylation is found at Asn-241 and Asn-284. 300 to 302 (STG) is a binding site for substrate. Catalysis depends on His-348, which acts as the Proton donor/acceptor.

Belongs to the glycosyltransferase 29 family. Expressed in fetal and adult brain, adult heart and skeletal muscle. As to expression, expressed in fetal and adult brain, not detected in adult heart and skeletal muscle.

It localises to the golgi apparatus membrane. It catalyses the reaction a ganglioside GT1b (d18:1(4E)) + CMP-N-acetyl-beta-neuraminate = a ganglioside GQ1b (d18:1(4E)) + CMP + H(+). It carries out the reaction a ganglioside GD3 (d18:1(4E)) + CMP-N-acetyl-beta-neuraminate = a ganglioside GT3 (d18:1(4E)) + CMP + H(+). The catalysed reaction is a ganglioside GD1a (d18:1(4E)) + CMP-N-acetyl-beta-neuraminate = a ganglioside GT1a (d18:1(4E)) + CMP + H(+). The enzyme catalyses a ganglioside GM1b (d18:1(4E)) + CMP-N-acetyl-beta-neuraminate = a ganglioside GD1c (d18:1(4E)) + CMP + H(+). It catalyses the reaction a ganglioside GQ1c (d18:1(4E)) + CMP-N-acetyl-beta-neuraminate = a ganglioside GP1c (d18:1(4E)) + CMP + H(+). Its pathway is protein modification; protein glycosylation. Its function is as follows. Involved in the synthesis of gangliosides GD1c, GT1a, GQ1b, GP1c and GT3 from GD1a, GT1b, GM1b and GD3 respectively. This Homo sapiens (Human) protein is Alpha-2,8-sialyltransferase 8E.